We begin with the raw amino-acid sequence, 267 residues long: tRNA pseudouridine synthase A (267 aa).

Asp-51 (nucleophile) is an active-site residue. Tyr-109 serves as a coordination point for substrate.

It belongs to the tRNA pseudouridine synthase TruA family. In terms of assembly, homodimer.

The catalysed reaction is uridine(38/39/40) in tRNA = pseudouridine(38/39/40) in tRNA. In terms of biological role, formation of pseudouridine at positions 38, 39 and 40 in the anticodon stem and loop of transfer RNAs. This is tRNA pseudouridine synthase A from Staphylococcus epidermidis (strain ATCC 35984 / DSM 28319 / BCRC 17069 / CCUG 31568 / BM 3577 / RP62A).